The chain runs to 54 residues: H-bracotoxin-Cf4 (54 aa).

The N-terminal stretch at methionine 1 to alanine 21 is a signal peptide. 3 cysteine pairs are disulfide-bonded: cysteine 24-cysteine 39, cysteine 31-cysteine 43, and cysteine 38-cysteine 53.

In terms of tissue distribution, expressed by the venom duct.

The protein resides in the secreted. In terms of biological role, this endoparasitoid wasp peptide has a role in disruption of the cellular host immune response, since it reduces the capacity of D.saccharalis hemocytes to encapsulate foreign bodies. On the other hand, it shows no effect on the humoral immune response, since it has no effect on phenoloxidase activity. This chain is H-bracotoxin-Cf4, found in Cotesia flavipes (Parasitic wasp).